A 480-amino-acid polypeptide reads, in one-letter code: MEESKTPHVAIIPSPGMGHLIPLVEFAKRLVHLHGLTVTFVIAGEGPPSKAQRTVLDSLPSSISSVFLPPVDLTDLSSSTRIESRISLTVTRSNPELRKVFDSFVEGGRLPTALVVDLFGTDAFDVAVEFHVPPYIFYPTTANVLSFFLHLPKLDETVSCEFRELTEPLMLPGCVPVAGKDFLDPAQDRKDDAYKWLLHNTKRYKEAEGILVNTFFELEPNAIKALQEPGLDKPPVYPVGPLVNIGKQEAKQTEESECLKWLDNQPLGSVLYVSFGSGGTLTCEQLNELALGLADSEQRFLWVIRSPSGIANSSYFDSHSQTDPLTFLPPGFLERTKKRGFVIPFWAPQAQVLAHPSTGGFLTHCGWNSTLESVVSGIPLIAWPLYAEQKMNAVLLSEDIRAALRPRAGDDGLVRREEVARVVKGLMEGEEGKGVRNKMKELKEAACRVLKDDGTSTKALSLVALKWKAHKKELEQNGNH.

H19 functions as the Proton acceptor in the catalytic mechanism. The active-site Charge relay is the D117. 4 residues coordinate UDP: S277, W346, A347, and H364. UDP-alpha-D-glucose contacts are provided by S277, W346, A347, H364, W367, N368, S369, E372, Y386, E388, and Q389. UDP-binding residues include N368, S369, E372, and Y386.

Belongs to the UDP-glycosyltransferase family.

The enzyme catalyses hydroquinone + UDP-alpha-D-glucose = hydroquinone O-beta-D-glucopyranoside + UDP + H(+). In terms of biological role, bifunctional O-glycosyltransferase and N-glycosyltransferase that can detoxify xenobiotics. Possesses high activity to metabolize the persistent pollutants 2,4,5-trichlorophenol (TCP) and 3,4-dichloroaniline (DCA). Also active on benzoates and benzoate derivatives in vitro. This chain is UDP-glycosyltransferase 72B1 (UGT72B1), found in Arabidopsis thaliana (Mouse-ear cress).